The primary structure comprises 87 residues: MKTIVCFLTILILVSSCESKNKKVVIIPGPKGERPDIKVVEGPSTVEDDFCYDCVRRCMVKGVGFYFRSCKGFVCRCYYPFMGGYGP.

Residues 1-19 form the signal peptide; that stretch reads MKTIVCFLTILILVSSCES. 3 disulfides stabilise this stretch: Cys-51–Cys-70, Cys-54–Cys-75, and Cys-58–Cys-77.

This sequence belongs to the DEFL family.

Its subcellular location is the secreted. This is Defensin-like protein 218 from Arabidopsis thaliana (Mouse-ear cress).